Reading from the N-terminus, the 317-residue chain is Protein phosphatase 1 regulatory subunit 3C (317 aa).

The PP1-binding motif motif lies at 84-87 (RVVF). The interaction with EPM2A stretch occupies residues 141-263 (PSSDYLSFRD…YRIVHVQWKP (123 aa)). The region spanning 149–257 (RDRFQKNFVC…NNEAQNYRIV (109 aa)) is the CBM21 domain.

Interacts with PPP1CC catalytic subunit of PP1 and associates with glycogen. Forms complexes with glycogen phosphorylase, glycogen synthase and phosphorylase kinase which is necessary for its regulation of PP1 activity. Also interacts with EPM2A/laforin. In terms of processing, ubiquitinated by NHLRC1/malin in a EPM2A/laforin-dependent manner.

In terms of biological role, acts as a glycogen-targeting subunit for PP1 and regulates its activity. Activates glycogen synthase, reduces glycogen phosphorylase activity and limits glycogen breakdown. Dramatically increases basal and insulin-stimulated glycogen synthesis upon overexpression in a variety of cell types. The protein is Protein phosphatase 1 regulatory subunit 3C of Rattus norvegicus (Rat).